We begin with the raw amino-acid sequence, 510 residues long: ATP synthase subunit alpha 1 (510 aa).

167-174 (GDRATGKT) is a binding site for ATP.

Belongs to the ATPase alpha/beta chains family. As to quaternary structure, F-type ATPases have 2 components, CF(1) - the catalytic core - and CF(0) - the membrane proton channel. CF(1) has five subunits: alpha(3), beta(3), gamma(1), delta(1), epsilon(1). CF(0) has three main subunits: a(1), b(2) and c(9-12). The alpha and beta chains form an alternating ring which encloses part of the gamma chain. CF(1) is attached to CF(0) by a central stalk formed by the gamma and epsilon chains, while a peripheral stalk is formed by the delta and b chains.

The protein localises to the cell inner membrane. It carries out the reaction ATP + H2O + 4 H(+)(in) = ADP + phosphate + 5 H(+)(out). In terms of biological role, produces ATP from ADP in the presence of a proton gradient across the membrane. The alpha chain is a regulatory subunit. In Paraburkholderia xenovorans (strain LB400), this protein is ATP synthase subunit alpha 1.